The following is a 681-amino-acid chain: Potassium-transporting ATPase ATP-binding subunit (681 aa).

4 helical membrane-spanning segments follow: residues 30-50 (LLVY…FFGI), 59-79 (LAIA…EAIA), 216-236 (ILLV…LPFT), and 255-275 (IALL…SIGI). Asp306 acts as the 4-aspartylphosphate intermediate in catalysis. ATP-binding positions include Asp343, Glu347, 376 to 383 (FTATTRMS), and Lys394. Mg(2+) contacts are provided by Asp517 and Asp521. The next 3 helical transmembrane spans lie at 587–607 (FAII…LNLM), 615–635 (AILS…PLSL), and 661–681 (LIAP…LGIV).

This sequence belongs to the cation transport ATPase (P-type) (TC 3.A.3) family. Type IA subfamily. In terms of assembly, the system is composed of three essential subunits: KdpA, KdpB and KdpC.

It is found in the cell membrane. The enzyme catalyses K(+)(out) + ATP + H2O = K(+)(in) + ADP + phosphate + H(+). Functionally, part of the high-affinity ATP-driven potassium transport (or Kdp) system, which catalyzes the hydrolysis of ATP coupled with the electrogenic transport of potassium into the cytoplasm. This subunit is responsible for energy coupling to the transport system and for the release of the potassium ions to the cytoplasm. This is Potassium-transporting ATPase ATP-binding subunit from Listeria monocytogenes serotype 4b (strain CLIP80459).